The following is a 458-amino-acid chain: Bifunctional protein GlmU (458 aa).

A pyrophosphorylase region spans residues 1 to 230; it reads MSLPTYSKLN…EWQVAGINSK (230 aa). Residues 14–17, K28, Q79, and 84–85 each bind UDP-N-acetyl-alpha-D-glucosamine; these read LAAG and GT. D108 contacts Mg(2+). The UDP-N-acetyl-alpha-D-glucosamine site is built by G141, E155, N170, and N228. Residue N228 participates in Mg(2+) binding. The segment at 231-251 is linker; it reads QDLAALERVYQGRYAARLLAK. An N-acetyltransferase region spans residues 252 to 458; sequence GVTLADPSRI…NWKRPEKVKK (207 aa). R334 and K352 together coordinate UDP-N-acetyl-alpha-D-glucosamine. The Proton acceptor role is filled by H364. Y367 and N378 together coordinate UDP-N-acetyl-alpha-D-glucosamine. Residues A381, 387 to 388, S406, A424, and R441 each bind acetyl-CoA; that span reads NY.

In the N-terminal section; belongs to the N-acetylglucosamine-1-phosphate uridyltransferase family. The protein in the C-terminal section; belongs to the transferase hexapeptide repeat family. In terms of assembly, homotrimer. Requires Mg(2+) as cofactor.

The protein resides in the cytoplasm. The enzyme catalyses alpha-D-glucosamine 1-phosphate + acetyl-CoA = N-acetyl-alpha-D-glucosamine 1-phosphate + CoA + H(+). It carries out the reaction N-acetyl-alpha-D-glucosamine 1-phosphate + UTP + H(+) = UDP-N-acetyl-alpha-D-glucosamine + diphosphate. The protein operates within nucleotide-sugar biosynthesis; UDP-N-acetyl-alpha-D-glucosamine biosynthesis; N-acetyl-alpha-D-glucosamine 1-phosphate from alpha-D-glucosamine 6-phosphate (route II): step 2/2. It participates in nucleotide-sugar biosynthesis; UDP-N-acetyl-alpha-D-glucosamine biosynthesis; UDP-N-acetyl-alpha-D-glucosamine from N-acetyl-alpha-D-glucosamine 1-phosphate: step 1/1. Its pathway is bacterial outer membrane biogenesis; LPS lipid A biosynthesis. Functionally, catalyzes the last two sequential reactions in the de novo biosynthetic pathway for UDP-N-acetylglucosamine (UDP-GlcNAc). The C-terminal domain catalyzes the transfer of acetyl group from acetyl coenzyme A to glucosamine-1-phosphate (GlcN-1-P) to produce N-acetylglucosamine-1-phosphate (GlcNAc-1-P), which is converted into UDP-GlcNAc by the transfer of uridine 5-monophosphate (from uridine 5-triphosphate), a reaction catalyzed by the N-terminal domain. The protein is Bifunctional protein GlmU of Methylobacillus flagellatus (strain ATCC 51484 / DSM 6875 / VKM B-1610 / KT).